The chain runs to 487 residues: GTPase Der (487 aa).

EngA-type G domains are found at residues 3–167 (LTLA…DEME) and 203–378 (LQVA…EVWN). GTP is bound by residues 9–16 (GRPNVGKS), 56–60 (DTAGL), and 119–122 (NKAE). The segment covering 167–190 (EQQAEEQAPETDVDLDPEDEDGEE) has biased composition (acidic residues). Positions 167–191 (EQQAEEQAPETDVDLDPEDEDGEEV) are disordered. GTP-binding positions include 209–216 (GRPNAGKS), 256–260 (DTAGM), and 321–324 (NKWD). The 87-residue stretch at 379 to 465 (RRIPTAALNR…RLTLRGQGDK (87 aa)) folds into the KH-like domain. The interval 458-487 (TLRGQGDKNPYKGRRKKNAGALAKHLKSRG) is disordered. Over residues 468-487 (YKGRRKKNAGALAKHLKSRG) the composition is skewed to basic residues.

The protein belongs to the TRAFAC class TrmE-Era-EngA-EngB-Septin-like GTPase superfamily. EngA (Der) GTPase family. In terms of assembly, associates with the 50S ribosomal subunit.

In terms of biological role, GTPase that plays an essential role in the late steps of ribosome biogenesis. The chain is GTPase Der from Ruegeria pomeroyi (strain ATCC 700808 / DSM 15171 / DSS-3) (Silicibacter pomeroyi).